Here is a 1357-residue protein sequence, read N- to C-terminus: DNA-directed RNA polymerase subunit beta (1357 aa).

It belongs to the RNA polymerase beta chain family. In terms of assembly, the RNAP catalytic core consists of 2 alpha, 1 beta, 1 beta' and 1 omega subunit. When a sigma factor is associated with the core the holoenzyme is formed, which can initiate transcription.

It catalyses the reaction RNA(n) + a ribonucleoside 5'-triphosphate = RNA(n+1) + diphosphate. Its function is as follows. DNA-dependent RNA polymerase catalyzes the transcription of DNA into RNA using the four ribonucleoside triphosphates as substrates. The sequence is that of DNA-directed RNA polymerase subunit beta from Neorickettsia sennetsu (Ehrlichia sennetsu).